Here is a 2049-residue protein sequence, read N- to C-terminus: Kinetochore-associated protein rod-1 (2049 aa).

Component of the RZZ complex composed of rod-1, czw-1 and zwl-1. Interacts (via N-terminus) with NDC80 complex component ndc-80.

It localises to the chromosome. It is found in the centromere. Its subcellular location is the kinetochore. The protein resides in the cytoplasm. The protein localises to the cytoskeleton. It localises to the spindle. In terms of biological role, essential component of the mitotic checkpoint, which prevents cells from prematurely exiting mitosis. Required for chromosome segregation, the assembly of the dynein-dynactin and mdf-1-mdf-2 complexes onto kinetochores and spindle pole separation. Plays a role in nuclear envelope breakdown. Its function related to the spindle assembly machinery and kinetochore-microtubule attachments likely depends on its association in the mitotic RZZ complex. The RZZ complex recruits the spindly-like protein spdl-1 to kinetochores. To prevent irregular chromosome segregation, the complex also inhibits the attachment of the kinetochore-associated NDC80 complex to microtubules. The recruitment of spdl-1 to kinetochores relieves this inhibition. Required for embryonic development. This is Kinetochore-associated protein rod-1 from Caenorhabditis elegans.